A 236-amino-acid polypeptide reads, in one-letter code: UPF0257 lipoprotein YnfC (236 aa).

An N-terminal signal peptide occupies residues 1–16; sequence MKYKLLPCLLAIFLTG. A lipid anchor (N-palmitoyl cysteine) is attached at cysteine 17. Cysteine 17 is lipidated: S-diacylglycerol cysteine.

This sequence belongs to the UPF0257 family.

The protein localises to the cell membrane. In Escherichia coli O17:K52:H18 (strain UMN026 / ExPEC), this protein is UPF0257 lipoprotein YnfC.